Consider the following 349-residue polypeptide: MTIGIVSYGAYVPRYRIKIEEIARLWGDDAEALKNGLMVYEKSVPDIDEDAATIAVEAARNAMIRSGVDPSRIGAVYTGSESHPYAVKPTSTIVAQAIGATPQMTAADFEFACKAGTAAVQACMGLVGSGMVDLGLAIGADVSQGAPSDALEYTAAAGGVACLIGRNESELAAIIEDTYSFTTDTPDFWRREGMPYPEHGGRFTGEPGYFKHVTNGAKGLLEKLGAKPEDYDYAVFHQPNGKFPSKAAKMLGFTKAQITPGLVVPKIGNTYSGSCLMGIAATLDQAKPGDRIFATAFGSGAGSDAFSITVTDRIEEIRNRAPTVSELIKDPVYIDYARYARHKGKIRLA.

(3S)-3-hydroxy-3-methylglutaryl-CoA contacts are provided by D29 and A30. The active-site Proton donor/acceptor is E81. Positions 113 and 154 each coordinate (3S)-3-hydroxy-3-methylglutaryl-CoA. C113 acts as the Acyl-thioester intermediate in catalysis. R202 is a binding site for CoA. Positions 204 and 237 each coordinate (3S)-3-hydroxy-3-methylglutaryl-CoA. H237 (proton donor/acceptor) is an active-site residue. K242 provides a ligand contact to CoA. Residues K246, N269, and S299 each coordinate (3S)-3-hydroxy-3-methylglutaryl-CoA.

The protein belongs to the thiolase-like superfamily. Archaeal HMG-CoA synthase family. In terms of assembly, interacts with acetoacetyl-CoA thiolase that catalyzes the precedent step in the pathway and with a DUF35 protein. The acetoacetyl-CoA thiolase/HMG-CoA synthase complex channels the intermediate via a fused CoA-binding site, which allows for efficient coupling of the endergonic thiolase reaction with the exergonic HMGCS reaction.

It carries out the reaction acetoacetyl-CoA + acetyl-CoA + H2O = (3S)-3-hydroxy-3-methylglutaryl-CoA + CoA + H(+). It functions in the pathway metabolic intermediate biosynthesis; (R)-mevalonate biosynthesis; (R)-mevalonate from acetyl-CoA: step 2/3. Functionally, catalyzes the condensation of acetyl-CoA with acetoacetyl-CoA to form 3-hydroxy-3-methylglutaryl-CoA (HMG-CoA). Functions in the mevalonate (MVA) pathway leading to isopentenyl diphosphate (IPP), a key precursor for the biosynthesis of isoprenoid compounds that are building blocks of archaeal membrane lipids. This Methanosarcina mazei (strain ATCC BAA-159 / DSM 3647 / Goe1 / Go1 / JCM 11833 / OCM 88) (Methanosarcina frisia) protein is Hydroxymethylglutaryl-CoA synthase.